Here is a 408-residue protein sequence, read N- to C-terminus: Exo-alpha-sialidase ARB_03431 (408 aa).

Residues 1–22 (MGIKQWLLSLVVVAISATATQA) form the signal peptide. Substrate is bound by residues Arg62, Arg81, Asp87, and Gln150. Residue Asn237 is glycosylated (N-linked (GlcNAc...) asparagine). Substrate contacts are provided by residues Arg267, Arg324, 324-325 (RT), 333-334 (YD), Lys339, Tyr360, Asp378, and 378-380 (DWY). Asn398 carries N-linked (GlcNAc...) asparagine glycosylation.

It belongs to the glycosyl hydrolase 33 family.

The protein localises to the secreted. It catalyses the reaction Hydrolysis of alpha-(2-&gt;3)-, alpha-(2-&gt;6)-, alpha-(2-&gt;8)- glycosidic linkages of terminal sialic acid residues in oligosaccharides, glycoproteins, glycolipids, colominic acid and synthetic substrates.. In terms of biological role, sialidase is able to release sialic acid from a wide variety of natural substrates. The polypeptide is Exo-alpha-sialidase ARB_03431 (Arthroderma benhamiae (strain ATCC MYA-4681 / CBS 112371) (Trichophyton mentagrophytes)).